A 422-amino-acid chain; its full sequence is Transcription termination factor Rho 1 (422 aa).

The Rho RNA-BD domain occupies 49-124 (AAIGGGVVEI…VKAHSINFTD (76 aa)). ATP-binding positions include 173-178 (GKGQRA), 185-190 (RAGKTI), and Arg-216.

It belongs to the Rho family. In terms of assembly, homohexamer. The homohexamer assembles into an open ring structure.

Functionally, facilitates transcription termination by a mechanism that involves Rho binding to the nascent RNA, activation of Rho's RNA-dependent ATPase activity, and release of the mRNA from the DNA template. The sequence is that of Transcription termination factor Rho 1 from Ehrlichia chaffeensis (strain ATCC CRL-10679 / Arkansas).